The following is a 120-amino-acid chain: Large ribosomal subunit protein uL22 (120 aa).

Belongs to the universal ribosomal protein uL22 family. Part of the 50S ribosomal subunit.

This protein binds specifically to 23S rRNA; its binding is stimulated by other ribosomal proteins, e.g. L4, L17, and L20. It is important during the early stages of 50S assembly. It makes multiple contacts with different domains of the 23S rRNA in the assembled 50S subunit and ribosome. Its function is as follows. The globular domain of the protein is located near the polypeptide exit tunnel on the outside of the subunit, while an extended beta-hairpin is found that lines the wall of the exit tunnel in the center of the 70S ribosome. In Corynebacterium aurimucosum (strain ATCC 700975 / DSM 44827 / CIP 107346 / CN-1) (Corynebacterium nigricans), this protein is Large ribosomal subunit protein uL22.